Consider the following 472-residue polypeptide: 3-isopropylmalate dehydratase large subunit (472 aa).

Residues Cys-347, Cys-407, and Cys-410 each coordinate [4Fe-4S] cluster.

Belongs to the aconitase/IPM isomerase family. LeuC type 1 subfamily. As to quaternary structure, heterodimer of LeuC and LeuD. The cofactor is [4Fe-4S] cluster.

The catalysed reaction is (2R,3S)-3-isopropylmalate = (2S)-2-isopropylmalate. The protein operates within amino-acid biosynthesis; L-leucine biosynthesis; L-leucine from 3-methyl-2-oxobutanoate: step 2/4. Catalyzes the isomerization between 2-isopropylmalate and 3-isopropylmalate, via the formation of 2-isopropylmaleate. This chain is 3-isopropylmalate dehydratase large subunit, found in Synechococcus sp. (strain CC9605).